A 211-amino-acid chain; its full sequence is Probable nicotinate-nucleotide adenylyltransferase (211 aa).

This sequence belongs to the NadD family.

The catalysed reaction is nicotinate beta-D-ribonucleotide + ATP + H(+) = deamido-NAD(+) + diphosphate. Its pathway is cofactor biosynthesis; NAD(+) biosynthesis; deamido-NAD(+) from nicotinate D-ribonucleotide: step 1/1. Functionally, catalyzes the reversible adenylation of nicotinate mononucleotide (NaMN) to nicotinic acid adenine dinucleotide (NaAD). In Legionella pneumophila (strain Paris), this protein is Probable nicotinate-nucleotide adenylyltransferase.